Here is a 547-residue protein sequence, read N- to C-terminus: Carboxypeptidase N subunit 2 (547 aa).

Positions 1–21 (MFPGAWLCWVSLLLLARLTQP) are cleaved as a signal peptide. Positions 22-49 (CPVGCDCFGREVFCSDEQLADIPPDIPP) constitute an LRRNT domain. N74, N111, and N119 each carry an N-linked (GlcNAc...) asparagine glycan. LRR repeat units lie at residues 98 to 119 (RLQDLEITGSPVSNLSAHIFSN), 122 to 143 (SLEKLTLDFDRLAGLPEDLFCH), 146 to 167 (ILESLQLQGNQLRTLPGRLFQS), 170 to 191 (DLRTLNLAQNLLTQLPKGAFQS), 194 to 215 (GLQMLKLSNNMLARLPEGALGS), 218 to 239 (SLQELFLDGNAITELSPHLFSQ), 242 to 263 (SLEMLWLQHNAICHLPVSLFSS), 266 to 287 (NLTFLSLKDNALRTLPEGLFAH), 290 to 311 (GLLHLSLSYNQLETIPEGAFTN), 314 to 335 (RLVSLTLSHNAITDLPEHVFRN), 338 to 359 (QLVKLSLDSNNLTALHPALFHN), and 362 to 383 (RLQLLNLSRNQLTTLPGGIFDT). N-linked (GlcNAc...) asparagine glycans are attached at residues N266 and N311. 3 N-linked (GlcNAc...) asparagine glycosylation sites follow: N348, N359, and N367. Residues 395–447 (NPWQCDCHLSYLTSWLRLYNNQISNTHTFCAGPAYLKGQLVPNLKQEQLICPV) form the LRRCT domain. An N-linked (GlcNAc...) asparagine glycan is attached at N520.

Tetramer of two catalytic chains and two glycosylated inactive chains.

The protein localises to the secreted. In terms of biological role, the 83 kDa subunit binds and stabilizes the catalytic subunit at 37 degrees Celsius and keeps it in circulation. Under some circumstances it may be an allosteric modifier of the catalytic subunit. The sequence is that of Carboxypeptidase N subunit 2 (Cpn2) from Mus musculus (Mouse).